The following is a 439-amino-acid chain: Type I secretion system membrane fusion protein PrsE (439 aa).

Residues 20 to 40 (LIGVSVLALALVAGVGGWAAT) form a helical membrane-spanning segment.

Belongs to the membrane fusion protein (MFP) (TC 8.A.1) family. As to quaternary structure, part of a type I secretion system composed of PrsD and PrsE.

It localises to the cell inner membrane. Its function is as follows. Mediates secretion of glycanase ExsH. The sequence is that of Type I secretion system membrane fusion protein PrsE (prsE) from Rhizobium meliloti (strain 1021) (Ensifer meliloti).